Here is a 492-residue protein sequence, read N- to C-terminus: Putative methyl-accepting chemotaxis AlkN (492 aa).

The next 2 helical transmembrane spans lie at 9–29 and 159–179; these read FFLI…GMRL and YVYF…FLLM. The HAMP domain occupies 180–231; that stretch reads KKTRSSIDEIVHVMNDMSRGDLTYRTIPSNDEVGKMQSSIIAMGAGVSALIE. The 237-residue stretch at 236–472 folds into the Methyl-accepting transducer domain; sequence IQGDLFNSAG…DMLDNANIIR (237 aa).

It belongs to the methyl-accepting chemotaxis (MCP) protein family.

The protein localises to the membrane. It functions in the pathway hydrocarbon metabolism; alkane degradation. Chemotactic-signal transducers respond to changes in the concentration of attractants and repellents in the environment, transduce a signal from the outside to the inside of the cell, and facilitate sensory adaptation through the variation of the level of methylation. This is Putative methyl-accepting chemotaxis AlkN (alkN) from Ectopseudomonas oleovorans (Pseudomonas oleovorans).